The primary structure comprises 281 residues: Putative zinc-binding protein ORF11 (281 aa).

The polypeptide is Putative zinc-binding protein ORF11 (ORF11) (Ictaluridae (bullhead catfishes)).